Reading from the N-terminus, the 376-residue chain is Alanine racemase 1 (376 aa).

The active-site Proton acceptor; specific for D-alanine is the lysine 40. At lysine 40 the chain carries N6-(pyridoxal phosphate)lysine. Arginine 138 is a substrate binding site. Tyrosine 268 (proton acceptor; specific for L-alanine) is an active-site residue. Methionine 316 is a substrate binding site.

It belongs to the alanine racemase family. Pyridoxal 5'-phosphate is required as a cofactor.

It catalyses the reaction L-alanine = D-alanine. It participates in amino-acid biosynthesis; D-alanine biosynthesis; D-alanine from L-alanine: step 1/1. Functionally, catalyzes the interconversion of L-alanine and D-alanine. May also act on other amino acids. This Oceanobacillus iheyensis (strain DSM 14371 / CIP 107618 / JCM 11309 / KCTC 3954 / HTE831) protein is Alanine racemase 1 (alr1).